The sequence spans 202 residues: Protein SYM1 (202 aa).

Helical transmembrane passes span 15-31, 48-66, 82-99, and 143-159; these read MAVTSTSSLFMIGDCVS, AGIYACAFAPAMTAWFRFL, AVFAPSSIGYYFSVMGLL, and VLASNCCGLVWNTFLAY.

This sequence belongs to the peroxisomal membrane protein PXMP2/4 family.

Its subcellular location is the mitochondrion inner membrane. In terms of biological role, may be involved in cellular response to stress. Required to maintain mitochondrial DNA (mtDNA) integrity and stability. In Yarrowia lipolytica (strain CLIB 122 / E 150) (Yeast), this protein is Protein SYM1 (SYM1).